The following is a 363-amino-acid chain: NADH-quinone oxidoreductase subunit H (363 aa).

The next 10 helical transmembrane spans lie at 29–49 (VLKI…YVVW), 62–82 (GPMY…KLLF), 96–116 (FVIA…VVPF), 127–147 (VGLL…ILAG), 163–183 (AAQV…VMIA), 202–222 (FFDW…VSGV), 238–257 (EIVA…LFFL), 264–286 (ILVS…QGWV), 299–319 (KGGW…YIWF), and 339–359 (FIPL…YGVI).

It belongs to the complex I subunit 1 family. As to quaternary structure, NDH-1 is composed of 14 different subunits. Subunits NuoA, H, J, K, L, M, N constitute the membrane sector of the complex.

It localises to the cell inner membrane. It catalyses the reaction a quinone + NADH + 5 H(+)(in) = a quinol + NAD(+) + 4 H(+)(out). Its function is as follows. NDH-1 shuttles electrons from NADH, via FMN and iron-sulfur (Fe-S) centers, to quinones in the respiratory chain. The immediate electron acceptor for the enzyme in this species is believed to be ubiquinone. Couples the redox reaction to proton translocation (for every two electrons transferred, four hydrogen ions are translocated across the cytoplasmic membrane), and thus conserves the redox energy in a proton gradient. This subunit may bind ubiquinone. The sequence is that of NADH-quinone oxidoreductase subunit H from Xanthomonas euvesicatoria pv. vesicatoria (strain 85-10) (Xanthomonas campestris pv. vesicatoria).